Reading from the N-terminus, the 269-residue chain is UPF0162 protein BUsg_167 (269 aa).

The protein belongs to the UPF0162 family.

This Buchnera aphidicola subsp. Schizaphis graminum (strain Sg) protein is UPF0162 protein BUsg_167.